The primary structure comprises 988 residues: Junction-mediating and -regulatory protein (988 aa).

Residues 1 to 126 (MSFALEETLE…RSTRSLLGDP (126 aa)) form an interaction with p300/EP300 region. Residues 51 to 178 (AQRQRSGSRE…RPAPREAQVS (128 aa)) form a disordered region. Residues Ser115 and Ser121 each carry the phosphoserine modification. Residues 160 to 175 (AAGAAAAAARPAPREA) are compositionally biased toward low complexity. 3 coiled-coil regions span residues 324–360 (SELR…ELLD), 489–541 (LQMM…YEVQ), and 590–621 (ASAY…AKKS). Residues 478 to 567 (EKLQYAVSKE…SIKRLISEKR (90 aa)) form an interaction with p300/EP300 region. Position 713 is a phosphoserine (Ser713). Residues 731–742 (EEKTEEVGEGRV) are compositionally biased toward basic and acidic residues. Disordered regions lie at residues 731 to 755 (EEKT…PQSL) and 800 to 865 (INPL…LFDS). Over residues 746-755 (PSQTTEPQSL) the composition is skewed to polar residues. Residues 803-827 (LPSPLPPTPPPPPPPPPPPPPPPLP) show a composition bias toward pro residues. A compositionally biased stretch (basic and acidic residues) spans 832-851 (SGPETLEKDLPRKEGNEKRI). A Phosphoserine modification is found at Ser888. One can recognise a WH2 domain in the interval 921–938 (DSNNILAQIRKGVKLKKV). The segment at 967–988 (IKEASPESEDEEEALPCTDWEN) is disordered. Residues 972-988 (PESEDEEEALPCTDWEN) are compositionally biased toward acidic residues. At Ser974 the chain carries Phosphoserine.

This sequence belongs to the JMY family. Interacts with p300/EP300, the complex activates p53/TP53 transcriptional activity. Interacts with TTC5; the interaction facilitates the association between JMY and p300/EP300. Interacts with MAP1LC3B; the interaction results in the activation of JYM's nucleation activity in the cytoplasm. Interacts with TTC5/STRAP; the interaction results in the inhibition of JYM's nucleation activity in the cytoplasm due to competition with MAP1LC3B binding. Post-translationally, ubiquitinated by MDM2, leading to its subsequent degradation by the proteasome. In case of DNA damage, the interaction with MDM2 is altered, preventing degradation and allowing interaction with p300/EP300 and its function in p53/TP53 stress response.

It is found in the nucleus. The protein localises to the cytoplasmic vesicle. Its subcellular location is the cytoplasm. It localises to the cytoskeleton. The protein resides in the endomembrane system. It is found in the autophagosome membrane. Its function is as follows. Acts both as a nuclear p53/TP53-cofactor and a cytoplasmic regulator of actin dynamics depending on conditions. In nucleus, acts as a cofactor that increases p53/TP53 response via its interaction with p300/EP300. Increases p53/TP53-dependent transcription and apoptosis, suggesting an important role in p53/TP53 stress response such as DNA damage. In cytoplasm, acts as a nucleation-promoting factor for both branched and unbranched actin filaments. Activates the Arp2/3 complex to induce branched actin filament networks. Also catalyzes actin polymerization in the absence of Arp2/3, creating unbranched filaments. Contributes to cell motility by controlling actin dynamics. May promote the rapid formation of a branched actin network by first nucleating new mother filaments and then activating Arp2/3 to branch off these filaments. Upon nutrient stress, directly recruited by MAP1LC3B to the phagophore membrane surfaces to promote actin assembly during autophagy. The p53/TP53-cofactor and actin activator activities are regulated via its subcellular location. The polypeptide is Junction-mediating and -regulatory protein (JMY) (Homo sapiens (Human)).